The primary structure comprises 699 residues: Condensin complex subunit 2 (699 aa).

Disordered regions lie at residues 1–35 (MSTS…SAAA) and 176–203 (ESQA…KRRK).

It belongs to the CND2 (condensin subunit 2) family. In terms of assembly, component of the condensin complex, which contains the XCAP-E/SMC2 and XCAP-C/SMC4 heterodimer, and three non SMC subunits that probably regulate the complex: XCAP-H/NCAPH, XCAP-D2/NCAPD2 and XCAP-G/NCAPG. Post-translationally, phosphorylated by CDK1. Its phosphorylation, as well as that of XCAP-D2 and XCAP-G subunits, activates the condensin complex and is required for chromosome condensation.

Its subcellular location is the nucleus. The protein resides in the cytoplasm. It is found in the chromosome. Functionally, regulatory subunit of the condensin complex, a complex required for conversion of interphase chromatin into mitotic-like condense chromosomes. The condensin complex probably introduces positive supercoils into relaxed DNA in the presence of type I topoisomerases and converts nicked DNA into positive knotted forms in the presence of type II topoisomerase. This chain is Condensin complex subunit 2 (ncaph), found in Xenopus laevis (African clawed frog).